The sequence spans 404 residues: Rhomboid-related protein 3 (404 aa).

EF-hand domains follow at residues 34-69 (APED…HSSK) and 70-105 (LDPH…KRSN). A run of 7 helical transmembrane segments spans residues 164 to 184 (WFMI…GVSL), 218 to 238 (IFMH…LLVG), 250 to 270 (IGLV…VADM), 274 to 294 (VVGS…NIVM), 303 to 325 (FKLL…AVWL), 338 to 358 (PSFV…VVVL), and 371 to 391 (WWIF…WNIF). Catalysis depends on S278, which acts as the Nucleophile. The active site involves H343.

This sequence belongs to the peptidase S54 family.

It is found in the membrane. It catalyses the reaction Cleaves type-1 transmembrane domains using a catalytic dyad composed of serine and histidine that are contributed by different transmembrane domains.. May be involved in regulated intramembrane proteolysis and the subsequent release of functional polypeptides from their membrane anchors. The sequence is that of Rhomboid-related protein 3 (RHBDL3) from Homo sapiens (Human).